Reading from the N-terminus, the 463-residue chain is Glycine--tRNA ligase (463 aa).

The substrate site is built by arginine 102 and glutamate 165. Residues 197 to 199 (RNE), 207 to 212 (FRTREF), 284 to 285 (EL), and 328 to 331 (GLTR) contribute to the ATP site. Position 212–216 (212–216 (FEQME)) interacts with substrate. 324-328 (EPAAG) serves as a coordination point for substrate.

It belongs to the class-II aminoacyl-tRNA synthetase family. In terms of assembly, homodimer.

Its subcellular location is the cytoplasm. It catalyses the reaction tRNA(Gly) + glycine + ATP = glycyl-tRNA(Gly) + AMP + diphosphate. Its function is as follows. Catalyzes the attachment of glycine to tRNA(Gly). The protein is Glycine--tRNA ligase of Mycobacterium bovis (strain ATCC BAA-935 / AF2122/97).